We begin with the raw amino-acid sequence, 109 residues long: Nucleoid-associated protein PM0205 (109 aa).

The protein belongs to the YbaB/EbfC family. Homodimer.

The protein resides in the cytoplasm. It localises to the nucleoid. In terms of biological role, binds to DNA and alters its conformation. May be involved in regulation of gene expression, nucleoid organization and DNA protection. This is Nucleoid-associated protein PM0205 from Pasteurella multocida (strain Pm70).